Consider the following 353-residue polypeptide: 3-isopropylmalate dehydrogenase (353 aa).

Position 76–89 (76–89) interacts with NAD(+); the sequence is GPKWDDPRAKVRPE. Substrate contacts are provided by arginine 96, arginine 106, arginine 134, and aspartate 223. Mg(2+) contacts are provided by aspartate 223, aspartate 247, and aspartate 251. 281-293 contributes to the NAD(+) binding site; that stretch reads GSAPDIAGKGIAN.

This sequence belongs to the isocitrate and isopropylmalate dehydrogenases family. LeuB type 1 subfamily. Homodimer. Mg(2+) serves as cofactor. Requires Mn(2+) as cofactor.

It localises to the cytoplasm. The enzyme catalyses (2R,3S)-3-isopropylmalate + NAD(+) = 4-methyl-2-oxopentanoate + CO2 + NADH. It functions in the pathway amino-acid biosynthesis; L-leucine biosynthesis; L-leucine from 3-methyl-2-oxobutanoate: step 3/4. Its function is as follows. Catalyzes the oxidation of 3-carboxy-2-hydroxy-4-methylpentanoate (3-isopropylmalate) to 3-carboxy-4-methyl-2-oxopentanoate. The product decarboxylates to 4-methyl-2 oxopentanoate. In Anaeromyxobacter dehalogenans (strain 2CP-C), this protein is 3-isopropylmalate dehydrogenase.